The sequence spans 541 residues: Plasminogen-binding protein PgbB (541 aa).

Basic and acidic residues-rich tracts occupy residues 420-434 (HKAK…ENKV) and 446-455 (VKTRRPEPTK). The disordered stretch occupies residues 420-541 (HKAKENKQPL…RRKALEMNKK (122 aa)). Residues 456-476 (DQNNAIQQGETKNNESKNTPI) are compositionally biased toward polar residues. The span at 480–541 (NAAKKEAPKP…RRKALEMNKK (62 aa)) shows a compositional bias: basic and acidic residues.

It is found in the cell surface. Its function is as follows. Binds plasminogen, specifically, and in a concentration and lysine-dependent manner. Plasminogen is the precursor of plasmin, a serine protease that cleaves fibrin, fibronectin, laminin and vitronectin. Acquisition of plasminogen/plasmin could enable H.pylori to degrade host components. In Helicobacter pylori (strain J99 / ATCC 700824) (Campylobacter pylori J99), this protein is Plasminogen-binding protein PgbB (pgbB).